A 2196-amino-acid polypeptide reads, in one-letter code: Non-reducing polyketide synthase CTB1 (2196 aa).

An N-terminal acylcarrier protein transacylase domain (SAT) region spans residues 11-250; sequence AFGDQTYDCS…TRLPITAPYH (240 aa). In terms of domain architecture, Ketosynthase family 3 (KS3) spans 381–814; that stretch reads KSPIAILAAS…GGNTCLVLED (434 aa). Active-site for beta-ketoacyl synthase activity residues include Cys-553, His-688, and His-733. Residues 922 to 1223 form a malonyl-CoA:ACP transacylase (MAT) domain region; sequence AFTGQGSAFA…QTFASINKDK (302 aa). A product template (PT) domain region spans residues 1298–1611; it reads SSSIHKVITN…VPKRLMHYIV (314 aa). Residues 1302–1441 form an N-terminal hotdog fold region; the sequence is HKVITNTITA…EKTALKSAAL (140 aa). In terms of domain architecture, PKS/mFAS DH spans 1302–1608; it reads HKVITNTITA…LQGVPKRLMH (307 aa). His-1335 functions as the Proton acceptor; for dehydratase activity in the catalytic mechanism. The interval 1460–1608 is C-terminal hotdog fold; it reads TYRFSKGMIY…LQGVPKRLMH (149 aa). Asp-1520 (proton donor; for dehydratase activity) is an active-site residue. A disordered region spans residues 1617–1666; it reads KASGPPTEKKTSSPPVEKKASAPVAPTRPAIQRKNASIPPPATQVTPQNK. Residues 1623–1636 are compositionally biased toward basic and acidic residues; sequence TEKKTSSPPVEKKA. Carrier domains follow at residues 1671 to 1748 and 1775 to 1857; these read PSVS…TRLS and DPSP…SGST. O-(pantetheine 4'-phosphoryl)serine occurs at positions 1708 and 1816. The span at 1856 to 1867 shows a compositional bias: polar residues; it reads STESFDSTTTKP. The disordered stretch occupies residues 1856 to 1923; that stretch reads STESFDSTTT…PPKGRIPPAW (68 aa). Positions 1872 to 1887 are enriched in low complexity; the sequence is ATPPLTDSSASSPPSS. A thioesterase (TE) domain region spans residues 1937–2187; sequence ILFLFPDGAG…SGAQMLVEHM (251 aa).

Pantetheine 4'-phosphate is required as a cofactor.

It carries out the reaction 6 malonyl-CoA + acetyl-CoA + 6 H(+) = nor-toralactone + 6 CO2 + 7 CoA + 2 H2O. It functions in the pathway mycotoxin biosynthesis. Polyketide synthase; part of the gene cluster that mediates the biosynthesis of cercosporin, a light-activated, non-host-selective toxin. The perylenequinone chromophore of cercosporin absorbs light energy to attain an electronically-activated triplet state and produces active oxygen species such as the hydroxyl radical, superoxide, hydrogen peroxide or singlet oxygen upon reaction with oxygen molecules. These reactive oxygen species cause damage to various cellular components including lipids, proteins and nucleic acids. The first step of cercosporin biosynthesis is performed by the polyketide synthase CTB1 which catalyzes the formation of nor-toralactone. The starter unit acyltransferase (SAT) domain of CTB1 initiates polyketide extension by the selective utilization of acetyl-CoA, which is elongated to the heptaketide in the beta-ketoacyl synthase (KS) domain by successive condensations with six malonyl units introduced by the malonyl acyltransferase (MAT) domain. The product template (PT) domain catalyzes C4-C9 and C2-C11 aldol cyclizations and dehydrations to a trihydroxynaphthalene, which is thought to be delivered to the thioesterase (TE) domain for product release. The bifunctional enzyme CTB3 then methylates nor-toralactone to toralactone before conducting an unusual oxidative aromatic ring opening. The O-methyltransferase CTB2 further methylates the nascent OH-6 of the CBT3 product, blocking further oxidation at this site before the reductase CTB6 reduces the 2-oxopropyl ketone at position C7, giving naphthalene. The FAD-dependent monooxygenase CTB5 in concert with the multicopper oxidase CTB12 are responsible for homodimerization of naphthalene with CTB7 installing the dioxepine moiety, finally producing cercosporin. The fasciclin domain-containing protein CTB11 might act with CTB5 and CTB12 whereas the roles of CTB9 and CTB10 have still to be elucidated. This is Non-reducing polyketide synthase CTB1 from Cercospora nicotianae (Barn spot disease fungus).